Consider the following 531-residue polypeptide: CTP synthase (531 aa).

The interval 1 to 265 (MAKYIFITGG…DRIITERLNL (265 aa)) is amidoligase domain. Serine 13 is a binding site for CTP. Residue serine 13 participates in UTP binding. 14 to 19 (SLGKGI) is an ATP binding site. Residue tyrosine 54 coordinates L-glutamine. ATP is bound at residue aspartate 71. Positions 71 and 139 each coordinate Mg(2+). Residues 146 to 148 (DIE), 186 to 191 (KTKPTQ), and lysine 222 each bind CTP. Residues 186–191 (KTKPTQ) and lysine 222 contribute to the UTP site. The Glutamine amidotransferase type-1 domain occupies 290-529 (NVALVGKYVE…IRACLEYKRK (240 aa)). Glycine 349 is an L-glutamine binding site. Cysteine 376 (nucleophile; for glutamine hydrolysis) is an active-site residue. L-glutamine contacts are provided by residues 377–380 (LGMQ), glutamate 400, and arginine 457. Catalysis depends on residues histidine 502 and glutamate 504.

The protein belongs to the CTP synthase family. As to quaternary structure, homotetramer.

The enzyme catalyses UTP + L-glutamine + ATP + H2O = CTP + L-glutamate + ADP + phosphate + 2 H(+). The catalysed reaction is L-glutamine + H2O = L-glutamate + NH4(+). It catalyses the reaction UTP + NH4(+) + ATP = CTP + ADP + phosphate + 2 H(+). It functions in the pathway pyrimidine metabolism; CTP biosynthesis via de novo pathway; CTP from UDP: step 2/2. Its activity is regulated as follows. Allosterically activated by GTP, when glutamine is the substrate; GTP has no effect on the reaction when ammonia is the substrate. The allosteric effector GTP functions by stabilizing the protein conformation that binds the tetrahedral intermediate(s) formed during glutamine hydrolysis. Inhibited by the product CTP, via allosteric rather than competitive inhibition. Its function is as follows. Catalyzes the ATP-dependent amination of UTP to CTP with either L-glutamine or ammonia as the source of nitrogen. Regulates intracellular CTP levels through interactions with the four ribonucleotide triphosphates. The protein is CTP synthase of Aquifex aeolicus (strain VF5).